Consider the following 202-residue polypeptide: Securin-2 (202 aa).

The disordered stretch occupies residues 60-105; it reads TRKALGTVNRATEKSVKTNGPRKQKQPSFSAKKMTEKTVKTKSSVP. The short motif at 61–64 is the D-box element; the sequence is RKAL. Residues 163-173 carry the SH3-binding motif; the sequence is PPSPVKMPSPP.

Belongs to the securin family. In terms of tissue distribution, expressed at low levels in the pituitary, liver, spleen, prostate, testis, ovary, small intestine and colon. Also expressed in various pituitary, testicular, liver and ovarian tumors.

The protein resides in the cytoplasm. It is found in the nucleus. The chain is Securin-2 (PTTG2) from Homo sapiens (Human).